Reading from the N-terminus, the 372-residue chain is Phospho-N-acetylmuramoyl-pentapeptide-transferase (372 aa).

10 consecutive transmembrane segments (helical) span residues 25–45 (RSLL…PVMI), 73–93 (TMGG…WADL), 98–118 (VWIV…DDWI), 134–154 (FFWT…IAQN), 176–196 (SIPL…YLVI), 211–231 (GLAI…AYLA), 251–271 (LVVI…YNAH), 275–295 (IFMG…IAVM), 300–320 (IVFA…FLQI), and 349–369 (QVVT…LMTL).

The protein belongs to the glycosyltransferase 4 family. MraY subfamily. Mg(2+) is required as a cofactor.

Its subcellular location is the cell inner membrane. It catalyses the reaction UDP-N-acetyl-alpha-D-muramoyl-L-alanyl-gamma-D-glutamyl-meso-2,6-diaminopimeloyl-D-alanyl-D-alanine + di-trans,octa-cis-undecaprenyl phosphate = di-trans,octa-cis-undecaprenyl diphospho-N-acetyl-alpha-D-muramoyl-L-alanyl-D-glutamyl-meso-2,6-diaminopimeloyl-D-alanyl-D-alanine + UMP. The protein operates within cell wall biogenesis; peptidoglycan biosynthesis. Catalyzes the initial step of the lipid cycle reactions in the biosynthesis of the cell wall peptidoglycan: transfers peptidoglycan precursor phospho-MurNAc-pentapeptide from UDP-MurNAc-pentapeptide onto the lipid carrier undecaprenyl phosphate, yielding undecaprenyl-pyrophosphoryl-MurNAc-pentapeptide, known as lipid I. The chain is Phospho-N-acetylmuramoyl-pentapeptide-transferase from Acinetobacter baylyi (strain ATCC 33305 / BD413 / ADP1).